The following is a 326-amino-acid chain: Aspartate--ammonia ligase (326 aa).

It belongs to the class-II aminoacyl-tRNA synthetase family. AsnA subfamily.

The protein localises to the cytoplasm. It carries out the reaction L-aspartate + NH4(+) + ATP = L-asparagine + AMP + diphosphate + H(+). It functions in the pathway amino-acid biosynthesis; L-asparagine biosynthesis; L-asparagine from L-aspartate (ammonia route): step 1/1. The protein is Aspartate--ammonia ligase of Malacoplasma penetrans (strain HF-2) (Mycoplasma penetrans).